A 224-amino-acid polypeptide reads, in one-letter code: Urease accessory protein UreF (224 aa).

Belongs to the UreF family. In terms of assembly, ureD, UreF and UreG form a complex that acts as a GTP-hydrolysis-dependent molecular chaperone, activating the urease apoprotein by helping to assemble the nickel containing metallocenter of UreC. The UreE protein probably delivers the nickel.

The protein localises to the cytoplasm. In terms of biological role, required for maturation of urease via the functional incorporation of the urease nickel metallocenter. This is Urease accessory protein UreF from Pseudomonas fluorescens (strain ATCC BAA-477 / NRRL B-23932 / Pf-5).